A 31-amino-acid chain; its full sequence is Cyclotide mra3 (31 aa).

Disulfide bonds link Cys-5-Cys-21, Cys-9-Cys-23, and Cys-14-Cys-28.

Post-translationally, this is a cyclic peptide. Contains 3 disulfide bonds.

Its function is as follows. Probably participates in a plant defense mechanism. The polypeptide is Cyclotide mra3 (Melicytus ramiflorus (Whitey wood)).